A 94-amino-acid chain; its full sequence is Cell division protein FtsB (94 aa).

Topologically, residues 1–8 are cytoplasmic; that stretch reads MRLRSPYW. A helical transmembrane segment spans residues 9–26; sequence LFVVLILALAGLQYRLWV. Over 27–94 the chain is Periplasmic; that stretch reads GDGSLAQVRD…DGETLYQLAK (68 aa). Residues 31–78 are a coiled coil; that stretch reads LAQVRDLQKQIADQHGENERLLERNRILEAEVAELKKGTETVEERARH.

Belongs to the FtsB family. In terms of assembly, part of a complex composed of FtsB, FtsL and FtsQ.

It localises to the cell inner membrane. Essential cell division protein. May link together the upstream cell division proteins, which are predominantly cytoplasmic, with the downstream cell division proteins, which are predominantly periplasmic. The protein is Cell division protein FtsB of Pseudomonas aeruginosa (strain ATCC 15692 / DSM 22644 / CIP 104116 / JCM 14847 / LMG 12228 / 1C / PRS 101 / PAO1).